Reading from the N-terminus, the 57-residue chain is Large ribosomal subunit protein bL32 (57 aa).

Belongs to the bacterial ribosomal protein bL32 family.

In Bacillus anthracis (strain A0248), this protein is Large ribosomal subunit protein bL32.